The chain runs to 141 residues: Hemoglobin subunit alpha (141 aa).

One can recognise a Globin domain in the interval 1-141 (VLSPADKTNI…VSTVLTSKYR (141 aa)). Ser-3 is subject to Phosphoserine. An N6-succinyllysine modification is found at Lys-7. A Phosphothreonine modification is found at Thr-8. Lys-11 bears the N6-succinyllysine mark. Lys-16 carries the N6-acetyllysine; alternate modification. Lys-16 is subject to N6-succinyllysine; alternate. Tyr-24 carries the post-translational modification Phosphotyrosine. Position 35 is a phosphoserine (Ser-35). The residue at position 40 (Lys-40) is an N6-succinyllysine. At Ser-49 the chain carries Phosphoserine. His-58 contacts O2. Position 87 (His-87) interacts with heme b. Phosphoserine is present on Ser-102. Thr-108 carries the post-translational modification Phosphothreonine. Position 124 is a phosphoserine (Ser-124). Phosphothreonine occurs at positions 134 and 137. Position 138 is a phosphoserine (Ser-138).

The protein belongs to the globin family. In terms of assembly, heterotetramer of two alpha chains and two beta chains. As to expression, red blood cells.

In terms of biological role, involved in oxygen transport from the lung to the various peripheral tissues. Its function is as follows. Hemopressin acts as an antagonist peptide of the cannabinoid receptor CNR1. Hemopressin-binding efficiently blocks cannabinoid receptor CNR1 and subsequent signaling. This Canis lupus familiaris (Dog) protein is Hemoglobin subunit alpha (HBA).